We begin with the raw amino-acid sequence, 158 residues long: Snaclec flavocetin-A subunit alpha (158 aa).

The N-terminal stretch at 1 to 23 (MERLIFVSFGLLVVILSLSGTGA) is a signal peptide. Disulfide bonds link cysteine 27–cysteine 38, cysteine 55–cysteine 152, and cysteine 127–cysteine 144. A C-type lectin domain is found at 34–153 (YDRYCYQAFS…CGTENPFVCK (120 aa)).

It belongs to the snaclec family. As to quaternary structure, tetramer of heterodimers of alpha and beta subunits (alphabeta)(4); disulfide-linked. In terms of tissue distribution, expressed by the venom gland.

Its subcellular location is the secreted. In terms of biological role, strong platelet aggregation inhibitor. Binds specifically to platelet glycoprotein Ibalpha (GP1BA) with high affinity and inhibits vWF-dependent platelet aggregation. Has also been observed to induce small agglutinates in washed platelets by binding to GPIb. This chain is Snaclec flavocetin-A subunit alpha, found in Protobothrops flavoviridis (Habu).